The sequence spans 288 residues: Proteasome assembly chaperone 1 (288 aa).

The residue at position 2 (Ala-2) is an N-acetylalanine. Positions 12 to 38 (TPCRAGTEEEEEEEDGNRETPEDREVR) are disordered. Thr-18 carries the post-translational modification Phosphothreonine. The span at 28–38 (NRETPEDREVR) shows a compositional bias: basic and acidic residues. Thr-54 carries the phosphothreonine modification. The residue at position 180 (Ser-180) is a Phosphoserine. N6-acetyllysine is present on Lys-264.

It belongs to the PSMG1 family. As to quaternary structure, forms a heterodimer with PSMG2. The PSMG1-PSMG2 heterodimer interacts directly with the PSMA5 and PSMA7 proteasome alpha subunits. In terms of processing, degraded by the proteasome upon completion of 20S proteasome maturation.

It localises to the cytoplasm. Its subcellular location is the endoplasmic reticulum. In terms of biological role, chaperone protein which promotes assembly of the 20S proteasome as part of a heterodimer with PSMG2. The PSMG1-PSMG2 heterodimer binds to the PSMA5 and PSMA7 proteasome subunits, promotes assembly of the proteasome alpha subunits into the heteroheptameric alpha ring and prevents alpha ring dimerization. The chain is Proteasome assembly chaperone 1 from Bos taurus (Bovine).